The primary structure comprises 333 residues: Adenosine deaminase (333 aa).

2 residues coordinate Zn(2+): H12 and H14. 2 residues coordinate substrate: H14 and D16. Residues H14–D16, S141, and G170 contribute to the pentostatin site. Residue G170 participates in substrate binding. H197 is a binding site for Zn(2+). Residues E200, H221, and D278 each coordinate pentostatin. E200 (proton donor) is an active-site residue. Residue D278 participates in Zn(2+) binding. D279 contacts substrate.

The protein belongs to the metallo-dependent hydrolases superfamily. Adenosine and AMP deaminases family. Adenosine deaminase subfamily. Zn(2+) serves as cofactor.

It catalyses the reaction adenosine + H2O + H(+) = inosine + NH4(+). The catalysed reaction is 2'-deoxyadenosine + H2O + H(+) = 2'-deoxyinosine + NH4(+). Functionally, catalyzes the hydrolytic deamination of adenosine and 2-deoxyadenosine. The sequence is that of Adenosine deaminase from Salmonella typhimurium (strain LT2 / SGSC1412 / ATCC 700720).